A 219-amino-acid chain; its full sequence is Vesicle-associated membrane protein 721 (219 aa).

Residues 1–196 (MAQQSLIYSF…MWLQNMKIKL (196 aa)) lie on the Cytoplasmic side of the membrane. A Longin domain is found at 10–114 (FVARGTVILV…SLNKEFGSKL (105 aa)). The 61-residue stretch at 130–190 (KLAKVKAQVS…TQMRRKMWLQ (61 aa)) folds into the v-SNARE coiled-coil homology domain. Residues 197 to 217 (IVLAIIIALILIIVLSVCHGF) form a helical; Anchor for type IV membrane protein membrane-spanning segment. Residues 218 to 219 (KC) lie on the Vesicular side of the membrane.

This sequence belongs to the synaptobrevin family. Expressed in flowers, leaves, stems and roots.

The protein resides in the cell membrane. It is found in the early endosome membrane. Involved in the targeting and/or fusion of transport vesicles to their target membrane. The chain is Vesicle-associated membrane protein 721 from Arabidopsis thaliana (Mouse-ear cress).